The sequence spans 198 residues: Sulfite reductase, dissimilatory-type subunit alpha (198 aa).

[4Fe-4S] cluster contacts are provided by Cys45, Cys64, Cys67, and Cys70. The 4Fe-4S ferredoxin-type domain maps to 55–83; sequence GTLSIDNKNCTRCMHCINTMPRALKIGDE.

As to quaternary structure, heterohexamer of two alpha, two beta and two gamma subunits.

Part of the complex that catalyzes the reduction of sulfite to sulfide. The alpha and beta subunits may have arisen by gene duplication. They both bind 2 iron-sulfur clusters, but the alpha subunit seems to be catalytically inactive, due to substitutions along the putative substrate access channel, and because it binds sirohydrochlorin (the dematallated form of siroheme) instead of siroheme. The polypeptide is Sulfite reductase, dissimilatory-type subunit alpha (dsrA) (Megalodesulfovibrio gigas (strain ATCC 19364 / DSM 1382 / NCIMB 9332 / VKM B-1759) (Desulfovibrio gigas)).